A 333-amino-acid chain; its full sequence is NAC domain-containing protein 26 (333 aa).

The region spanning 14–173 (LPPGFRFHPT…DWAVCRIFHK (160 aa)) is the NAC domain. The DNA-binding element occupies 114–179 (IGMKKTLVFY…IFHKSSGIKK (66 aa)). The tract at residues 143–162 (ADASPPQPPPPPSSAEPPRQ) is disordered. The span at 147-157 (PPQPPPPPSSA) shows a compositional bias: pro residues.

In terms of assembly, forms homodimers. Forms heterodimers with NAC20. Forms heterodimers with NAC23. In terms of tissue distribution, expressed in developing seeds.

The protein resides in the nucleus. In terms of biological role, transcription factor that acts redundantly with NAC20 to regulate the expression of genes involved in the biosynthesis of starch and storage proteins in grain. Directly binds to the promoters of starch synthase 1 (SS1), pullulanase (PUL), glutelin A1 (GLUA1), glutelins B4 and B5 (GLUB4 and GLUB5), alpha-globulin and 16 kDa prolamin, and activates their expression. Possesses transactivation activity in yeast. This chain is NAC domain-containing protein 26, found in Oryza sativa subsp. indica (Rice).